A 192-amino-acid chain; its full sequence is Sporulation initiation phosphotransferase B (192 aa).

His-30 is subject to Phosphohistidine.

In terms of assembly, homodimer. Dimerization is essential for activity as both monomers contribute to the formation of the active site. Post-translationally, phosphorylated by spo0F.

Its subcellular location is the cytoplasm. Its function is as follows. Key element in the phosphorelay regulating sporulation initiation. Acts on spo0A. Mediates reversible phosphoryl transfer from spo0F to spo0A. This is Sporulation initiation phosphotransferase B (spo0B) from Bacillus subtilis (strain 168).